Reading from the N-terminus, the 199-residue chain is Recombination protein RecR (199 aa).

Residues 57–72 form a C4-type zinc finger; the sequence is CEICGNMDTENICRIC. One can recognise a Toprim domain in the interval 80-175; the sequence is SVIAIVETVA…KISRLASGIP (96 aa).

Belongs to the RecR family.

In terms of biological role, may play a role in DNA repair. It seems to be involved in an RecBC-independent recombinational process of DNA repair. It may act with RecF and RecO. The chain is Recombination protein RecR from Rickettsia canadensis (strain McKiel).